The following is a 448-amino-acid chain: Proteases secretion protein PrtE (448 aa).

Over methionine 1–arginine 30 the chain is Cytoplasmic. Residues leucine 31–alanine 50 form a helical membrane-spanning segment. Over proline 51–glutamate 448 the chain is Periplasmic.

Belongs to the membrane fusion protein (MFP) (TC 8.A.1) family.

Its subcellular location is the cell inner membrane. Functionally, involved in the secretion of proteases A, B, C and G. In Dickeya chrysanthemi (Pectobacterium chrysanthemi), this protein is Proteases secretion protein PrtE (prtE).